Here is a 625-residue protein sequence, read N- to C-terminus: Vitamin B12 transporter BtuB (625 aa).

Positions 1 to 21 (MTIKKYTLLTALSVTAFSGWA) are cleaved as a signal peptide. A TonB box motif is present at residues 31-38 (DEMVVTAN). Residues 43 to 157 (PKSSVLAPVD…IGGVINILTG (115 aa)) form the TBDR plug domain. Residues S90, N97, and 115 to 116 (IT) contribute to the cyanocob(III)alamin site. The region spanning 160 to 625 (KPGTTLSAGL…EYYFTGSYNF (466 aa)) is the TBDR beta-barrel domain. The next 3 beta stranded transmembrane spans lie at 163–170 (TTLSAGLG), 174–183 (YQTYDGSTQQ), and 189–200 (TTVTLAGNYTYS). Residues D204, Q217, D219, and D221 each contribute to the Ca(2+) site. The next 2 membrane-spanning stretches (beta stranded) occupy residues 223 to 233 (FMGKMLWAGLE) and 238 to 254 (EQFN…NRSD). Residues Y255, D256, and D269 each contribute to the Ca(2+) site. 14 beta stranded membrane-spanning segments follow: residues 271–285 (RKLS…LRYK), 287–304 (GIYA…KDYN), 317–333 (SLDE…NTFQ), 336–345 (NGMISAGADW), 363–379 (FTQH…QQIS), 381–391 (VTLEGAVRSDD), 395–410 (FGWH…WEFI), 413–427 (YRLI…KAPN), 445–454 (ESKQWEGGVE), 460–469 (LTWRLSAYRN), 484–501 (YFNI…TGSF), 505–520 (PLSH…PRNA), 528–540 (RRAK…QLDW), and 546–561 (DWSV…YDKD). S317 serves as a coordination point for cyanocob(III)alamin. R528 lines the cyanocob(III)alamin pocket. Y562 is a binding site for cyanocob(III)alamin. The next 3 membrane-spanning stretches (beta stranded) occupy residues 569-583 (TVEL…LAVS), 596-607 (IANLFDKDYEMV), and 613-625 (PGRE…SYNF). A TonB C-terminal box motif is present at residues 608–625 (YGYQTPGREYYFTGSYNF).

The protein belongs to the TonB-dependent receptor family. BtuB (TC 1.B.14.3.1) subfamily.

The protein localises to the cell outer membrane. Functionally, involved in the active translocation of vitamin B12 (cyanocobalamin) across the outer membrane to the periplasmic space. It derives its energy for transport by interacting with the trans-periplasmic membrane protein TonB. In Yersinia pestis bv. Antiqua (strain Antiqua), this protein is Vitamin B12 transporter BtuB.